Here is a 114-residue protein sequence, read N- to C-terminus: SCP2 domain-containing protein YusD (114 aa).

The 81-residue stretch at 21-101 (NASTLLITFQ…RALLKLEAIL (81 aa)) folds into the SCP2 domain.

The sequence is that of SCP2 domain-containing protein YusD (yusD) from Bacillus subtilis (strain 168).